We begin with the raw amino-acid sequence, 625 residues long: tRNA uridine 5-carboxymethylaminomethyl modification enzyme MnmG (625 aa).

13–18 (GGGHAG) is a binding site for FAD. 273–287 (GPRYCPSIEDKVVRF) serves as a coordination point for NAD(+).

This sequence belongs to the MnmG family. In terms of assembly, homodimer. Heterotetramer of two MnmE and two MnmG subunits. Requires FAD as cofactor.

The protein resides in the cytoplasm. In terms of biological role, NAD-binding protein involved in the addition of a carboxymethylaminomethyl (cmnm) group at the wobble position (U34) of certain tRNAs, forming tRNA-cmnm(5)s(2)U34. In Methylococcus capsulatus (strain ATCC 33009 / NCIMB 11132 / Bath), this protein is tRNA uridine 5-carboxymethylaminomethyl modification enzyme MnmG.